The chain runs to 612 residues: Vitamin B12 transporter BtuB (612 aa).

The first 20 residues, 1–20, serve as a signal peptide directing secretion; it reads MIKKSLLCTALSVTAFSGWA. Positions 26-33 match the TonB box motif; sequence DTLVVTAN. The TBDR plug domain occupies 38 to 152; it reads PRSAVLAPIT…IGGVVNIITT (115 aa). Residues S85, N92, and 110–111 contribute to the cyanocob(III)alamin site; that span reads VS. The TBDR beta-barrel domain occupies 155–612; sequence KPGTELTAGV…EYTLSGSYTF (458 aa). Transmembrane regions (beta stranded) follow at residues 158-165, 169-178, and 184-195; these read TELTAGVG, YQNYDVSTQQ, and TRVTLMGDYAYT. Positions 199, 211, 213, and 215 each coordinate Ca(2+). A run of 2 beta stranded transmembrane segments spans residues 217–227 and 232–248; these read FLSKTLYGALE and DTWS…NRTN. Ca(2+)-binding residues include Y249, D250, and D261. The next 14 membrane-spanning stretches (beta stranded) occupy residues 263 to 277, 279 to 296, 309 to 325, 328 to 337, 353 to 369, 371 to 381, 385 to 400, 403 to 417, 434 to 443, 449 to 458, 473 to 490, 494 to 509, 517 to 529, and 535 to 550; these read RKLY…LRFN, ELIQ…KDYN, TLDE…NSIV, HGNVGAGVDW, YDQR…QQLG, FTFEGAARSDD, FGRH…WEFI, YRFI…KAPN, QSKQWEGAFE, VNWRVSGYRN, YFNE…TANF, PLAH…SRNA, RRSK…QLDW, and DWGL…YDTD. Residue T309 coordinates cyanocob(III)alamin. R517 provides a ligand contact to cyanocob(III)alamin. Y551 is a cyanocob(III)alamin binding site. 3 beta stranded membrane-spanning segments follow: residues 556-570, 583-594, and 600-612; these read PVKM…LAVS, IANRFDKDYETV, and AGRE…SYTF. The TonB C-terminal box motif lies at 595 to 612; the sequence is YGYATAGREYTLSGSYTF.

The protein belongs to the TonB-dependent receptor family. BtuB (TC 1.B.14.3.1) subfamily.

The protein localises to the cell outer membrane. In terms of biological role, involved in the active translocation of vitamin B12 (cyanocobalamin) across the outer membrane to the periplasmic space. It derives its energy for transport by interacting with the trans-periplasmic membrane protein TonB. The sequence is that of Vitamin B12 transporter BtuB from Citrobacter freundii.